The primary structure comprises 311 residues: Pseudouridine-5'-phosphate glycosidase (311 aa).

The active-site Proton donor is Glu-32. Positions 96 and 116 each coordinate substrate. Asp-148 serves as a coordination point for Mn(2+). 150–152 (SAD) is a binding site for substrate. The active-site Nucleophile is the Lys-169.

The protein belongs to the pseudouridine-5'-phosphate glycosidase family. As to quaternary structure, homotrimer. Mn(2+) is required as a cofactor.

It catalyses the reaction D-ribose 5-phosphate + uracil = psi-UMP + H2O. In terms of biological role, catalyzes the reversible cleavage of pseudouridine 5'-phosphate (PsiMP) to ribose 5-phosphate and uracil. Functions biologically in the cleavage direction, as part of a pseudouridine degradation pathway. The protein is Pseudouridine-5'-phosphate glycosidase of Roseiflexus sp. (strain RS-1).